The primary structure comprises 398 residues: MRGDFYKQLTNDLETARAEGLFKEERIITSAQQADITVADGSHVINFCANNYLGLANHPELINAAKAGMDSHGFGMASVRFICGTQDSHKALEQKLASFLGMEDAILYSSCFDANGGLFETLLGAEDAIISDALNHASIIDGVRLCKAKRYRYANNDMAELEARLKEAREAGARHVLIATDGVFSMDGVIANLKGVCDLADKYDALVMVDDSHAVGFVGENGRGSHEYCDVMGRVDIITGTLGKALGGASGGYTAARKEVVEWLRQRSRPYLFSNSLAPAIVAASIKVLEMVEAGAELRDRLWANARQFREQMSAAGFTLAGADHAIIPVMLGDAVVAQKFARELQKEGIYVTGFFYPVVPKGQARIRTQMSAAHTPEQITRAVDAFTRIGKQLGVIA.

111–112 (CF) provides a ligand contact to pyridoxal 5'-phosphate. His136 contacts substrate. Residues Ser185, 210–213 (DDSH), 241–244 (TLGK), and 274–275 (SN) contribute to the pyridoxal 5'-phosphate site. Lys244 is modified (N6-(pyridoxal phosphate)lysine). Arg368 contributes to the substrate binding site.

Belongs to the class-II pyridoxal-phosphate-dependent aminotransferase family. In terms of assembly, homodimer. It depends on pyridoxal 5'-phosphate as a cofactor.

The enzyme catalyses glycine + acetyl-CoA = (2S)-2-amino-3-oxobutanoate + CoA. Its pathway is amino-acid degradation; L-threonine degradation via oxydo-reductase pathway; glycine from L-threonine: step 2/2. Catalyzes the cleavage of 2-amino-3-ketobutyrate to glycine and acetyl-CoA. In Salmonella typhimurium (strain LT2 / SGSC1412 / ATCC 700720), this protein is 2-amino-3-ketobutyrate coenzyme A ligase.